Reading from the N-terminus, the 1819-residue chain is U3 small nucleolar RNA-associated protein 10 (1819 aa).

The stretch at 583–620 is one HEAT 1 repeat; the sequence is LDFQAILPFLLVALADPSERIRREAAAALAAIGGIYKK. The next 2 helical transmembrane spans lie at 945–965 and 1001–1021; these read IQSG…AIVN and ALLL…HSVM. HEAT repeat units follow at residues 1045-1082, 1269-1306, 1313-1351, and 1775-1812; these read QTID…AFEH, LTLV…QNPE, IRVL…KYGK, and ALLP…VLGE.

Belongs to the HEATR1/UTP10 family. In terms of assembly, component of the ribosomal small subunit (SSU) processome.

It localises to the nucleus. It is found in the nucleolus. Its subcellular location is the membrane. Functionally, involved in nucleolar processing of pre-18S ribosomal RNA. Involved in ribosome biosynthesis. This Aspergillus clavatus (strain ATCC 1007 / CBS 513.65 / DSM 816 / NCTC 3887 / NRRL 1 / QM 1276 / 107) protein is U3 small nucleolar RNA-associated protein 10.